A 100-amino-acid polypeptide reads, in one-letter code: Urease subunit gamma (100 aa).

Belongs to the urease gamma subunit family. Heterotrimer of UreA (gamma), UreB (beta) and UreC (alpha) subunits. Three heterotrimers associate to form the active enzyme.

It localises to the cytoplasm. The enzyme catalyses urea + 2 H2O + H(+) = hydrogencarbonate + 2 NH4(+). The protein operates within nitrogen metabolism; urea degradation; CO(2) and NH(3) from urea (urease route): step 1/1. This is Urease subunit gamma from Streptomyces griseus subsp. griseus (strain JCM 4626 / CBS 651.72 / NBRC 13350 / KCC S-0626 / ISP 5235).